A 182-amino-acid chain; its full sequence is Shikimate kinase (182 aa).

Residue 14–19 participates in ATP binding; the sequence is GAGKTT. Thr18 lines the Mg(2+) pocket. Substrate-binding residues include Asp36, Arg60, and Gly84. ATP is bound at residue Arg122. A substrate-binding site is contributed by Arg141.

This sequence belongs to the shikimate kinase family. As to quaternary structure, monomer. Mg(2+) is required as a cofactor.

Its subcellular location is the cytoplasm. It catalyses the reaction shikimate + ATP = 3-phosphoshikimate + ADP + H(+). The protein operates within metabolic intermediate biosynthesis; chorismate biosynthesis; chorismate from D-erythrose 4-phosphate and phosphoenolpyruvate: step 5/7. Functionally, catalyzes the specific phosphorylation of the 3-hydroxyl group of shikimic acid using ATP as a cosubstrate. The protein is Shikimate kinase of Marinomonas sp. (strain MWYL1).